The sequence spans 274 residues: MQNITQSWFVQGMIKATTDAWLKGWDERNGGNLTLRLDDADIALYHDNFHPQPRYIPLSQPMHLLANTPFIVTGSGKFFRNVQLDPAANLGVVKVDSDGAGYHILWGLTNEAVPTSELPAHFLSHCERIKATNGKDRVIMHCHATNLIALTYVLENDTAVFTRQLWEGSTECLVVFPDGVGILPWMVPGTDEIGQATAQEMQKHSLVLWPFHGVFGSGPTLDETFGLIDTAEKSAQVLVKIYSMGGMKQTISREELIALGKRFGVTPLASALAL.

E117 is an active-site residue. Zn(2+) is bound by residues H141, H143, and H212.

It belongs to the aldolase class II family. RhaD subfamily. In terms of assembly, homotetramer. Zn(2+) serves as cofactor.

The protein localises to the cytoplasm. The catalysed reaction is L-rhamnulose 1-phosphate = (S)-lactaldehyde + dihydroxyacetone phosphate. Its pathway is carbohydrate degradation; L-rhamnose degradation; glycerone phosphate from L-rhamnose: step 3/3. Its function is as follows. Catalyzes the reversible cleavage of L-rhamnulose-1-phosphate to dihydroxyacetone phosphate (DHAP) and L-lactaldehyde. This Shigella dysenteriae serotype 1 (strain Sd197) protein is Rhamnulose-1-phosphate aldolase.